The chain runs to 217 residues: GTP cyclohydrolase 1 (217 aa).

Residues C109, H112, and C180 each contribute to the Zn(2+) site.

This sequence belongs to the GTP cyclohydrolase I family. Toroid-shaped homodecamer, composed of two pentamers of five dimers.

It catalyses the reaction GTP + H2O = 7,8-dihydroneopterin 3'-triphosphate + formate + H(+). The protein operates within cofactor biosynthesis; 7,8-dihydroneopterin triphosphate biosynthesis; 7,8-dihydroneopterin triphosphate from GTP: step 1/1. The sequence is that of GTP cyclohydrolase 1 from Aliivibrio fischeri (strain ATCC 700601 / ES114) (Vibrio fischeri).